Consider the following 360-residue polypeptide: Aminomethyltransferase (360 aa).

It belongs to the GcvT family. As to quaternary structure, the glycine cleavage system is composed of four proteins: P, T, L and H.

It carries out the reaction N(6)-[(R)-S(8)-aminomethyldihydrolipoyl]-L-lysyl-[protein] + (6S)-5,6,7,8-tetrahydrofolate = N(6)-[(R)-dihydrolipoyl]-L-lysyl-[protein] + (6R)-5,10-methylene-5,6,7,8-tetrahydrofolate + NH4(+). Its function is as follows. The glycine cleavage system catalyzes the degradation of glycine. In Flavobacterium psychrophilum (strain ATCC 49511 / DSM 21280 / CIP 103535 / JIP02/86), this protein is Aminomethyltransferase.